A 1293-amino-acid chain; its full sequence is Cilia- and flagella-associated protein 57 A (1293 aa).

One copy of the WD 1 repeat lies at 72 to 113 (PGTKGITCMTLSPSKRLLAWSEDCDSGIIVVFDLIKLDKLEK). The interval 117 to 143 (QNYQEPSDKDKLDKQAEKDRRDRFEKE) is disordered. Residues 122–143 (PSDKDKLDKQAEKDRRDRFEKE) show a composition bias toward basic and acidic residues. WD repeat units follow at residues 309 to 348 (PKNEQFAIQCIQPYSKGFLVGGKECTILFYEKDVDLKNPY), 359 to 398 (DMKAMITSLLLTPNEEKLIVGVDSGQLLQVPFTSDSMQLN), 411 to 450 (FHSDKITGLDVCIRKSLVATCSVDKTVRIWNYSDNQLENS), 535 to 574 (RGSGKVRTIFWEEDDQGFYTGSTDGLVIYWRVDDNGPQKT), and 700 to 739 (SHFGPITRMRISFKDNYIFTAGEDGALIIYENKEKEYQVK). Coiled coils occupy residues 756 to 1016 (RDQY…REKT), 1045 to 1079 (IKELKRDIGPKEEEIAKMKEQIANMNSEILHFKRT), and 1209 to 1285 (INHL…QIQN).

Belongs to the CFAP57 family. In terms of assembly, forms a heterodimer with CFAP57C. Associates with components of the nexin-dynein regulatory complex (N-DRC) and the CFAP184:CFAP263 complex.

It is found in the cell projection. It localises to the cilium. In terms of biological role, associates with components of the nexin-dynein regulatory complex (N-DRC), a key regulator of ciliary/flagellar motility, and might act as an inner dynein arm (IDA) hub or linkage. This chain is Cilia- and flagella-associated protein 57 A (CFAP57A), found in Tetrahymena thermophila (strain SB210).